Here is a 142-residue protein sequence, read N- to C-terminus: Translation initiation factor 2 subunit beta (142 aa).

The protein belongs to the eIF-2-beta/eIF-5 family. As to quaternary structure, heterotrimer composed of an alpha, a beta and a gamma chain.

In terms of biological role, eIF-2 functions in the early steps of protein synthesis by forming a ternary complex with GTP and initiator tRNA. In Thermococcus kodakarensis (strain ATCC BAA-918 / JCM 12380 / KOD1) (Pyrococcus kodakaraensis (strain KOD1)), this protein is Translation initiation factor 2 subunit beta.